The sequence spans 81 residues: ATP synthase subunit c (81 aa).

2 consecutive transmembrane segments (helical) span residues 7–27 (AASV…PGIG) and 57–77 (LAFM…LLFA).

Belongs to the ATPase C chain family. F-type ATPases have 2 components, F(1) - the catalytic core - and F(0) - the membrane proton channel. F(1) has five subunits: alpha(3), beta(3), gamma(1), delta(1), epsilon(1). F(0) has four main subunits: a(1), b(1), b'(1) and c(10-14). The alpha and beta chains form an alternating ring which encloses part of the gamma chain. F(1) is attached to F(0) by a central stalk formed by the gamma and epsilon chains, while a peripheral stalk is formed by the delta, b and b' chains.

The protein localises to the cellular thylakoid membrane. Its function is as follows. F(1)F(0) ATP synthase produces ATP from ADP in the presence of a proton or sodium gradient. F-type ATPases consist of two structural domains, F(1) containing the extramembraneous catalytic core and F(0) containing the membrane proton channel, linked together by a central stalk and a peripheral stalk. During catalysis, ATP synthesis in the catalytic domain of F(1) is coupled via a rotary mechanism of the central stalk subunits to proton translocation. Functionally, key component of the F(0) channel; it plays a direct role in translocation across the membrane. A homomeric c-ring of between 10-14 subunits forms the central stalk rotor element with the F(1) delta and epsilon subunits. The sequence is that of ATP synthase subunit c from Synechococcus elongatus (strain ATCC 33912 / PCC 7942 / FACHB-805) (Anacystis nidulans R2).